A 151-amino-acid chain; its full sequence is Lectin-like protein BA14k (151 aa).

The first 26 residues, 1 to 26 (MNIFKQTCVGAFAVIFGATSIAPTMA), serve as a signal peptide directing secretion. The chain crosses the membrane as a helical span at residues 83-103 (GWWYPLAAFGAGAIIGGAVSQ).

Belongs to the BA14k family.

It localises to the cell membrane. Its function is as follows. Has immunoglobulin-binding and hemagglutination properties, and can bind to mannose. Essential for virulence. May be involved in LPS biosynthesis or polysaccharide transport. In Brucella anthropi (strain ATCC 49188 / DSM 6882 / CCUG 24695 / JCM 21032 / LMG 3331 / NBRC 15819 / NCTC 12168 / Alc 37) (Ochrobactrum anthropi), this protein is Lectin-like protein BA14k.